The chain runs to 345 residues: Methylthioribose-1-phosphate isomerase (345 aa).

Residues 47–49 (RGA), R90, and Q199 each bind substrate. D240 acts as the Proton donor in catalysis. 250–251 (NK) is a binding site for substrate.

This sequence belongs to the eIF-2B alpha/beta/delta subunits family. MtnA subfamily.

The catalysed reaction is 5-(methylsulfanyl)-alpha-D-ribose 1-phosphate = 5-(methylsulfanyl)-D-ribulose 1-phosphate. Its pathway is amino-acid biosynthesis; L-methionine biosynthesis via salvage pathway; L-methionine from S-methyl-5-thio-alpha-D-ribose 1-phosphate: step 1/6. Functionally, catalyzes the interconversion of methylthioribose-1-phosphate (MTR-1-P) into methylthioribulose-1-phosphate (MTRu-1-P). The protein is Methylthioribose-1-phosphate isomerase of Crocosphaera subtropica (strain ATCC 51142 / BH68) (Cyanothece sp. (strain ATCC 51142)).